The following is a 310-amino-acid chain: Formimidoylglutamase (310 aa).

Residues His-120, Asp-148, His-150, Asp-152, Asp-233, and Asp-235 each coordinate Mn(2+).

This sequence belongs to the arginase family. It depends on Mn(2+) as a cofactor.

The catalysed reaction is N-formimidoyl-L-glutamate + H2O = formamide + L-glutamate. It functions in the pathway amino-acid degradation; L-histidine degradation into L-glutamate; L-glutamate from N-formimidoyl-L-glutamate (hydrolase route): step 1/1. Functionally, catalyzes the conversion of N-formimidoyl-L-glutamate to L-glutamate and formamide. This Nocardia farcinica (strain IFM 10152) protein is Formimidoylglutamase.